We begin with the raw amino-acid sequence, 101 residues long: Large ribosomal subunit protein bL21 (101 aa).

This sequence belongs to the bacterial ribosomal protein bL21 family. As to quaternary structure, part of the 50S ribosomal subunit. Contacts protein L20.

In terms of biological role, this protein binds to 23S rRNA in the presence of protein L20. This Corynebacterium diphtheriae (strain ATCC 700971 / NCTC 13129 / Biotype gravis) protein is Large ribosomal subunit protein bL21.